The primary structure comprises 428 residues: Nematode resistance protein-like HSPRO1 (428 aa).

In terms of assembly, interacts with SNF4.

Its subcellular location is the cytoplasm. Positive regulator of basal resistance. The chain is Nematode resistance protein-like HSPRO1 (HSPRO1) from Arabidopsis thaliana (Mouse-ear cress).